Consider the following 124-residue polypeptide: Large ribosomal subunit protein bL20 (124 aa).

This sequence belongs to the bacterial ribosomal protein bL20 family.

In terms of biological role, binds directly to 23S ribosomal RNA and is necessary for the in vitro assembly process of the 50S ribosomal subunit. It is not involved in the protein synthesizing functions of that subunit. The polypeptide is Large ribosomal subunit protein bL20 (Ehrlichia chaffeensis (strain ATCC CRL-10679 / Arkansas)).